The following is a 313-amino-acid chain: Methionyl-tRNA formyltransferase (313 aa).

Residue 113–116 (SLLP) participates in (6S)-5,6,7,8-tetrahydrofolate binding.

This sequence belongs to the Fmt family.

The catalysed reaction is L-methionyl-tRNA(fMet) + (6R)-10-formyltetrahydrofolate = N-formyl-L-methionyl-tRNA(fMet) + (6S)-5,6,7,8-tetrahydrofolate + H(+). In terms of biological role, attaches a formyl group to the free amino group of methionyl-tRNA(fMet). The formyl group appears to play a dual role in the initiator identity of N-formylmethionyl-tRNA by promoting its recognition by IF2 and preventing the misappropriation of this tRNA by the elongation apparatus. The polypeptide is Methionyl-tRNA formyltransferase (Francisella tularensis subsp. holarctica (strain FTNF002-00 / FTA)).